The sequence spans 512 residues: Lysine--tRNA ligase (512 aa).

Mg(2+) contacts are provided by E421 and E428.

Belongs to the class-II aminoacyl-tRNA synthetase family. In terms of assembly, homodimer. Mg(2+) is required as a cofactor.

The protein resides in the cytoplasm. The enzyme catalyses tRNA(Lys) + L-lysine + ATP = L-lysyl-tRNA(Lys) + AMP + diphosphate. The protein is Lysine--tRNA ligase of Aeromonas salmonicida (strain A449).